A 115-amino-acid polypeptide reads, in one-letter code: ESX-1 secretion-associated protein EspL (115 aa).

This Mycobacterium tuberculosis (strain CDC 1551 / Oshkosh) protein is ESX-1 secretion-associated protein EspL.